Reading from the N-terminus, the 215-residue chain is Pyrrolidone-carboxylate peptidase (215 aa).

Active-site residues include Glu-81, Cys-144, and His-168.

This sequence belongs to the peptidase C15 family. In terms of assembly, homotetramer.

The protein resides in the cytoplasm. It carries out the reaction Release of an N-terminal pyroglutamyl group from a polypeptide, the second amino acid generally not being Pro.. Its function is as follows. Removes 5-oxoproline from various penultimate amino acid residues except L-proline. This chain is Pyrrolidone-carboxylate peptidase, found in Bacillus velezensis (strain DSM 23117 / BGSC 10A6 / LMG 26770 / FZB42) (Bacillus amyloliquefaciens subsp. plantarum).